The sequence spans 228 residues: Probable 26S proteasome regulatory subunit p28 (228 aa).

ANK repeat units lie at residues M1 to L30, D35 to L64, S71 to L100, Q106 to I135, F139 to N168, and Q173 to L203.

In terms of assembly, interacts with RPT3.

Functionally, acts as a chaperone during the assembly of the 26S proteasome, specifically of the 19S regulatory complex (RC) and appears to have an overlapping role with RPN14. The sequence is that of Probable 26S proteasome regulatory subunit p28 (NAS6) from Saccharomyces cerevisiae (strain ATCC 204508 / S288c) (Baker's yeast).